A 215-amino-acid chain; its full sequence is Pyrrolidone-carboxylate peptidase (215 aa).

Residues glutamate 80, cysteine 143, and histidine 167 contribute to the active site.

The protein belongs to the peptidase C15 family. In terms of assembly, homotetramer.

It is found in the cytoplasm. The catalysed reaction is Release of an N-terminal pyroglutamyl group from a polypeptide, the second amino acid generally not being Pro.. Functionally, removes 5-oxoproline from various penultimate amino acid residues except L-proline. The chain is Pyrrolidone-carboxylate peptidase from Bacillus cereus (strain Q1).